Consider the following 203-residue polypeptide: Ponticulin-like protein H (203 aa).

An N-terminal signal peptide occupies residues 1–20 (MKLLNSLVLLAALCAITANG). Asn-58 carries N-linked (GlcNAc...) asparagine glycosylation. The span at 127–168 (SDSTNPTSTPSTTPSATPTVTPSTTPTVTPTVTPSTTPTVAP) shows a compositional bias: low complexity. Positions 127–183 (SDSTNPTSTPSTTPSATPTVTPSTTPTVTPTVTPSTTPTVAPTVPPTTPPSTTTGSG) are disordered. Residue Ser-182 is the site of GPI-like-anchor amidated serine attachment. Positions 183–203 (GSTVVASFGLIVSILLASLAL) are cleaved as a propeptide — removed in mature form.

Belongs to the ponticulin family. In terms of processing, the GPI-like-anchor contains a phosphoceramide group, rather than a phosphatidyl group.

Its subcellular location is the cell membrane. Functionally, binds F-actin and nucleates actin assembly. The polypeptide is Ponticulin-like protein H (ponH) (Dictyostelium discoideum (Social amoeba)).